The following is a 372-amino-acid chain: tRNA pseudouridine synthase D (372 aa).

Asp-85 serves as the catalytic Nucleophile. One can recognise a TRUD domain in the interval Gly-160–Gly-330.

It belongs to the pseudouridine synthase TruD family.

It carries out the reaction uridine(13) in tRNA = pseudouridine(13) in tRNA. Responsible for synthesis of pseudouridine from uracil-13 in transfer RNAs. In Campylobacter jejuni subsp. jejuni serotype O:6 (strain 81116 / NCTC 11828), this protein is tRNA pseudouridine synthase D.